The following is a 200-amino-acid chain: uncharacterized protein (200 aa).

It belongs to the HAD-like hydrolase superfamily. CbbY/CbbZ/Gph/YieH family.

This is an uncharacterized protein from Haemophilus influenzae (strain ATCC 51907 / DSM 11121 / KW20 / Rd).